A 453-amino-acid chain; its full sequence is Na(+)/H(+) antiporter NhaA (453 aa).

Helical transmembrane passes span 28-48 (FLHIEAFSGVVLLLAAAAALI), 79-99 (LHFLINDGLMTIFFLVVGMEI), 115-135 (ALPLAAALGGVVVPALIYFIL), 144-164 (GWAVPTATDIAFAVGVLALLG), 173-193 (VFLLALAIIDDIVAVLIIAVF), 196-216 (GGMDYSGFIIAAVGILMVLGM), 241-261 (TGAHPTLAGVVLGLMTPVFAP), 321-341 (VAFGIMPLFALANAGVSLDGI), 355-375 (VLIALVAGKPLGIIGASFLMV), 393-413 (LVGLLAGIGFTMSIFIATLAF), and 424-444 (LGILLASLSAAVLGLAWGFFQ).

This sequence belongs to the NhaA Na(+)/H(+) (TC 2.A.33) antiporter family.

The protein localises to the cell inner membrane. The enzyme catalyses Na(+)(in) + 2 H(+)(out) = Na(+)(out) + 2 H(+)(in). Na(+)/H(+) antiporter that extrudes sodium in exchange for external protons. The sequence is that of Na(+)/H(+) antiporter NhaA from Janthinobacterium sp. (strain Marseille) (Minibacterium massiliensis).